Here is a 62-residue protein sequence, read N- to C-terminus: Photosystem II reaction center protein Z (62 aa).

2 consecutive transmembrane segments (helical) span residues 8-28 (AVFA…VVFA) and 41-61 (FSGT…NSLI).

This sequence belongs to the PsbZ family. PSII is composed of 1 copy each of membrane proteins PsbA, PsbB, PsbC, PsbD, PsbE, PsbF, PsbH, PsbI, PsbJ, PsbK, PsbL, PsbM, PsbT, PsbY, PsbZ, Psb30/Ycf12, at least 3 peripheral proteins of the oxygen-evolving complex and a large number of cofactors. It forms dimeric complexes.

The protein localises to the plastid. It localises to the chloroplast thylakoid membrane. Functionally, may control the interaction of photosystem II (PSII) cores with the light-harvesting antenna, regulates electron flow through the 2 photosystem reaction centers. PSII is a light-driven water plastoquinone oxidoreductase, using light energy to abstract electrons from H(2)O, generating a proton gradient subsequently used for ATP formation. The chain is Photosystem II reaction center protein Z from Calycanthus floridus var. glaucus (Eastern sweetshrub).